The primary structure comprises 321 residues: Olfactory receptor 3A3 (321 aa).

The Extracellular portion of the chain corresponds to 1 to 34; that stretch reads MSLQKLMEPEAGTNRTAVAEFILLGLVQTEEMQP. N-linked (GlcNAc...) asparagine glycosylation occurs at Asn-14. The helical transmembrane segment at 35–58 threads the bilayer; sequence VVFVLLLFAYLVTTGGNLSILAAV. At 59-66 the chain is on the cytoplasmic side; the sequence is LVEPKLHA. The chain crosses the membrane as a helical span at residues 67–88; the sequence is PMYFFLGNLSVLDVGCITVTVP. Topologically, residues 89–109 are extracellular; it reads AMLGRLLSHKSTISYDACLSQ. Cysteines 106 and 198 form a disulfide. A helical membrane pass occupies residues 110 to 129; the sequence is LFFFHLLAGMDCFLLTAMAY. The Cytoplasmic segment spans residues 130–149; the sequence is DRLLAICQPLTYSTRMSQTV. Residues 150–167 traverse the membrane as a helical segment; sequence QRMLVAASWACAFTNALT. Over 168-205 the chain is Extracellular; sequence HTVAMSTLNFCGPNEVNHFYCDLPQLFQLSCSSTQLNE. The helical transmembrane segment at 206-228 threads the bilayer; the sequence is LLLFVAAAFMAVAPLVFISVSYA. At 229–245 the chain is on the cytoplasmic side; that stretch reads HVVAAVLQIRSAEGRKK. The chain crosses the membrane as a helical span at residues 246-268; it reads AFSTCGSHLTVVGIFYGTGVFSY. The Extracellular segment spans residues 269–281; that stretch reads MRLGSVESSDKDK. Residues 282–301 form a helical membrane-spanning segment; sequence GVGVFMTVINPMLNPLIYSL. The Cytoplasmic segment spans residues 302–321; it reads RNTDVQGALCQLLVGKRSLT.

Belongs to the G-protein coupled receptor 1 family.

The protein localises to the cell membrane. Functionally, odorant receptor. The protein is Olfactory receptor 3A3 (OR3A3) of Homo sapiens (Human).